The primary structure comprises 93 residues: Alpha-conotoxin RVIIIA (93 aa).

Positions 1–20 (MMSKMGAMFVLLLLFTLASS) are cleaved as a signal peptide. The propeptide occupies 21 to 46 (QQEGDVQARKTHPKREFQRILLRSGR). Residues glutamate 63 and glutamate 68 each carry the 4-carboxyglutamate modification.

Post-translationally, contains 5 disulfide bonds. As to expression, expressed by the venom duct.

The protein resides in the secreted. Functionally, alpha-conotoxins act on postsynaptic membranes, they bind to the nicotinic acetylcholine receptors (nAChR) and thus inhibit them. This toxin provokes a nearly complete and slowly reversible inhibition of both the human adult (alpha-1-beta-1-epsilon-delta (CHRNA1-CHRNB1-CHRND-CHRNE)) and human fetal (alpha-1-beta-1-gamma-delta (CHRNA1-CHRNB1-CHRNG-CHRND)) neuromuscular nAChRs. It also reversibly blocks the neuromuscular alpha-7/CHRNA7 nAChR, the alpha-3-beta-2 (CHRNA3-CHRNB2) nAChR, the chimeric alpha-6 or -3/beta-3 or -2 (CHRNA6/CHRNA3-CHRNB2-CHRNB3) nAChR and with a low potency the alpha-4-beta-2 (CHRNA4-CHRNB2) nAChR. In addition, the toxin also inhibits the alpha-9-alpha-10 (CHRNA9-CHRNA10) nAChR with a high potency (IC(50)=187 nM). This chain is Alpha-conotoxin RVIIIA, found in Conus radiatus (Rayed cone).